The sequence spans 389 residues: Putative sugar efflux transporter DR_1322 (389 aa).

The next 12 helical transmembrane spans lie at 10 to 30 (AVLLLGLATSLAGPFMSLFAV), 34 to 54 (GMTPLQLGLFLTFNALSAVLV), 69 to 89 (KPLVLLTLAAGVLAYLALSGV), 96 to 116 (MATGVLLLAVSSAAFPQVFAF), 135 to 155 (VLRAVFSFAWVVGPGVGAAVL), 161 to 181 (SGVFLLAALCYALAGLPLLFI), 211 to 231 (GWVVAAFTLYGMAMHMGMVMF), 246 to 266 (VGFLVGLCALLEIPVMLLFVL), 281 to 301 (LLLFVVHFALIYLAQGMPLLI), 308 to 328 (AAVLAVMAGLGMTYFQQLMPG), 341 to 361 (SVVGSMLSGIVAGAWAQVFGY), and 363 to 383 (PVFLLCAALSLAAWGMMLWAT).

It belongs to the major facilitator superfamily. Set transporter family.

It localises to the cell membrane. In terms of biological role, involved in the efflux of sugars. The physiological role may be the detoxification of non-metabolizable sugar analogs. This is Putative sugar efflux transporter DR_1322 from Deinococcus radiodurans (strain ATCC 13939 / DSM 20539 / JCM 16871 / CCUG 27074 / LMG 4051 / NBRC 15346 / NCIMB 9279 / VKM B-1422 / R1).